Consider the following 122-residue polypeptide: UPF0102 protein Dred_2035 (122 aa).

Belongs to the UPF0102 family.

The sequence is that of UPF0102 protein Dred_2035 from Desulforamulus reducens (strain ATCC BAA-1160 / DSM 100696 / MI-1) (Desulfotomaculum reducens).